The chain runs to 434 residues: D-amino acid dehydrogenase (434 aa).

Residue 3–17 (VLVLGSGVIGTTSAW) coordinates FAD.

Belongs to the DadA oxidoreductase family. FAD serves as cofactor.

It carries out the reaction a D-alpha-amino acid + A + H2O = a 2-oxocarboxylate + AH2 + NH4(+). It functions in the pathway amino-acid degradation; D-alanine degradation; NH(3) and pyruvate from D-alanine: step 1/1. In terms of biological role, oxidative deamination of D-amino acids. This Stenotrophomonas maltophilia (strain R551-3) protein is D-amino acid dehydrogenase.